The sequence spans 113 residues: Photosystem II reaction center Psb28 protein (113 aa).

It belongs to the Psb28 family. In terms of assembly, part of the photosystem II complex.

The protein localises to the cellular thylakoid membrane. The polypeptide is Photosystem II reaction center Psb28 protein (Prochlorococcus marinus (strain NATL2A)).